A 162-amino-acid polypeptide reads, in one-letter code: 6,7-dimethyl-8-ribityllumazine synthase (162 aa).

5-amino-6-(D-ribitylamino)uracil-binding positions include Y27, 58 to 60 (ALE), and 87 to 89 (CVI). (2S)-2-hydroxy-3-oxobutyl phosphate is bound at residue 92-93 (ET). The active-site Proton donor is the H95. Residue N120 participates in 5-amino-6-(D-ribitylamino)uracil binding. R134 lines the (2S)-2-hydroxy-3-oxobutyl phosphate pocket.

This sequence belongs to the DMRL synthase family.

It carries out the reaction (2S)-2-hydroxy-3-oxobutyl phosphate + 5-amino-6-(D-ribitylamino)uracil = 6,7-dimethyl-8-(1-D-ribityl)lumazine + phosphate + 2 H2O + H(+). The protein operates within cofactor biosynthesis; riboflavin biosynthesis; riboflavin from 2-hydroxy-3-oxobutyl phosphate and 5-amino-6-(D-ribitylamino)uracil: step 1/2. Functionally, catalyzes the formation of 6,7-dimethyl-8-ribityllumazine by condensation of 5-amino-6-(D-ribitylamino)uracil with 3,4-dihydroxy-2-butanone 4-phosphate. This is the penultimate step in the biosynthesis of riboflavin. This is 6,7-dimethyl-8-ribityllumazine synthase from Azorhizobium caulinodans (strain ATCC 43989 / DSM 5975 / JCM 20966 / LMG 6465 / NBRC 14845 / NCIMB 13405 / ORS 571).